We begin with the raw amino-acid sequence, 513 residues long: Microcin J25-processing protein McjC (513 aa).

Residues 176-436 form the Asparagine synthetase domain; the sequence is STIDSIIDNI…FGSDIFWKKT (261 aa).

The protein resides in the cytoplasm. In terms of biological role, along with McjB, necessary and sufficient to process the inactive microcin J25 (McjA) precursor into the active peptide. May be involved in the formation of the amide bond between Gly-38 and Glu-53 of McjA. The protein is Microcin J25-processing protein McjC (mcjC) of Escherichia coli.